The chain runs to 587 residues: Lipoprotein LpqB (587 aa).

The signal sequence occupies residues 1–19; the sequence is MERLMRLTILLFLGAVLAG. Cysteine 20 carries N-palmitoyl cysteine lipidation. Residue cysteine 20 is the site of S-diacylglycerol cysteine attachment.

This sequence belongs to the LpqB lipoprotein family. In terms of assembly, interacts with MtrB, probably extracytoplasmically.

It is found in the cell membrane. The protein resides in the secreted. The protein localises to the cell wall. Functionally, may modulate activity of the MtrAB system in controlling homeostasis of the cell wall and cell division. The sequence is that of Lipoprotein LpqB from Mycobacterium tuberculosis (strain CDC 1551 / Oshkosh).